A 479-amino-acid polypeptide reads, in one-letter code: ATP synthase subunit beta (479 aa).

168 to 175 (GGAGVGKT) contributes to the ATP binding site.

The protein belongs to the ATPase alpha/beta chains family. As to quaternary structure, F-type ATPases have 2 components, CF(1) - the catalytic core - and CF(0) - the membrane proton channel. CF(1) has five subunits: alpha(3), beta(3), gamma(1), delta(1), epsilon(1). CF(0) has three main subunits: a(1), b(2) and c(9-12). The alpha and beta chains form an alternating ring which encloses part of the gamma chain. CF(1) is attached to CF(0) by a central stalk formed by the gamma and epsilon chains, while a peripheral stalk is formed by the delta and b chains.

The protein localises to the cell membrane. The catalysed reaction is ATP + H2O + 4 H(+)(in) = ADP + phosphate + 5 H(+)(out). In terms of biological role, produces ATP from ADP in the presence of a proton gradient across the membrane. The catalytic sites are hosted primarily by the beta subunits. In Frankia casuarinae (strain DSM 45818 / CECT 9043 / HFP020203 / CcI3), this protein is ATP synthase subunit beta.